We begin with the raw amino-acid sequence, 183 residues long: MSRIGKLPITVPKGVTVKLEGDNLLTVKGTKGTLSKKFNKDMIIKVEADQIVVQRPSDLKIYKSLHGLTRTLINNMVEGVTNGFQKTLEINGVGYRAQKQGKKLVLTLGYSHPVEMEDPEGIATEVPAPNKIIVKGIDKQVVGEVAAKIREKRLPEPYKGKGIKYETEVIRRKEGKTGGKGKK.

Belongs to the universal ribosomal protein uL6 family. Part of the 50S ribosomal subunit.

This protein binds to the 23S rRNA, and is important in its secondary structure. It is located near the subunit interface in the base of the L7/L12 stalk, and near the tRNA binding site of the peptidyltransferase center. The polypeptide is Large ribosomal subunit protein uL6 (Ruminiclostridium cellulolyticum (strain ATCC 35319 / DSM 5812 / JCM 6584 / H10) (Clostridium cellulolyticum)).